The following is a 156-amino-acid chain: Small ribosomal subunit protein uS7 (156 aa).

This sequence belongs to the universal ribosomal protein uS7 family. Part of the 30S ribosomal subunit. Contacts proteins S9 and S11.

Functionally, one of the primary rRNA binding proteins, it binds directly to 16S rRNA where it nucleates assembly of the head domain of the 30S subunit. Is located at the subunit interface close to the decoding center, probably blocks exit of the E-site tRNA. This Prochlorococcus marinus (strain SARG / CCMP1375 / SS120) protein is Small ribosomal subunit protein uS7.